Consider the following 206-residue polypeptide: tRNA (guanine-N(7)-)-methyltransferase (206 aa).

Glu-37, Glu-62, Asp-89, and Asp-112 together coordinate S-adenosyl-L-methionine. Asp-112 is an active-site residue. Substrate is bound by residues Lys-116 and Asp-148.

Belongs to the class I-like SAM-binding methyltransferase superfamily. TrmB family.

The enzyme catalyses guanosine(46) in tRNA + S-adenosyl-L-methionine = N(7)-methylguanosine(46) in tRNA + S-adenosyl-L-homocysteine. The protein operates within tRNA modification; N(7)-methylguanine-tRNA biosynthesis. Its function is as follows. Catalyzes the formation of N(7)-methylguanine at position 46 (m7G46) in tRNA. This Myxococcus xanthus (strain DK1622) protein is tRNA (guanine-N(7)-)-methyltransferase.